Consider the following 310-residue polypeptide: Putative S-adenosyl-L-methionine-dependent methyltransferase Mb0151 (310 aa).

Residues aspartate 132 and 161–162 contribute to the S-adenosyl-L-methionine site; that span reads DL.

The protein belongs to the UPF0677 family.

Exhibits S-adenosyl-L-methionine-dependent methyltransferase activity. This Mycobacterium bovis (strain ATCC BAA-935 / AF2122/97) protein is Putative S-adenosyl-L-methionine-dependent methyltransferase Mb0151.